The following is a 147-amino-acid chain: Transcriptional regulator MraZ (147 aa).

SpoVT-AbrB domains follow at residues 5-52 (NHPT…PMEE) and 81-124 (GQVV…NAEH).

This sequence belongs to the MraZ family. As to quaternary structure, forms oligomers.

Its subcellular location is the cytoplasm. It is found in the nucleoid. The chain is Transcriptional regulator MraZ from Koribacter versatilis (strain Ellin345).